The sequence spans 211 residues: Large ribosomal subunit protein uL3 (211 aa).

The segment at Asn122–Pro157 is disordered.

This sequence belongs to the universal ribosomal protein uL3 family. In terms of assembly, part of the 50S ribosomal subunit. Forms a cluster with proteins L14 and L19.

Functionally, one of the primary rRNA binding proteins, it binds directly near the 3'-end of the 23S rRNA, where it nucleates assembly of the 50S subunit. The sequence is that of Large ribosomal subunit protein uL3 from Trichormus variabilis (strain ATCC 29413 / PCC 7937) (Anabaena variabilis).